We begin with the raw amino-acid sequence, 238 residues long: NAD(P)H-hydrate epimerase (238 aa).

The 207-residue stretch at 11-217 folds into the YjeF N-terminal domain; that stretch reads AAALDKDLMS…EIHQKYNLQL (207 aa). A (6S)-NADPHX-binding site is contributed by 61-65; it reads NNGGD. K(+) is bound by residues N62 and D123. Residues 127–133 and D156 each bind (6S)-NADPHX; that span reads GFSFTGS. S159 contacts K(+).

This sequence belongs to the NnrE/AIBP family. K(+) serves as cofactor.

The protein resides in the cytoplasm. It localises to the mitochondrion. It catalyses the reaction (6R)-NADHX = (6S)-NADHX. The enzyme catalyses (6R)-NADPHX = (6S)-NADPHX. Functionally, catalyzes the epimerization of the S- and R-forms of NAD(P)HX, a damaged form of NAD(P)H that is a result of enzymatic or heat-dependent hydration. This is a prerequisite for the S-specific NAD(P)H-hydrate dehydratase to allow the repair of both epimers of NAD(P)HX. This is NAD(P)H-hydrate epimerase from Sclerotinia sclerotiorum (strain ATCC 18683 / 1980 / Ss-1) (White mold).